Consider the following 1063-residue polypeptide: Cellulose synthase A catalytic subunit 7 [UDP-forming] (1063 aa).

The Cytoplasmic segment spans residues 1 to 213 (MDTASVTGGE…IPSSKINPYR (213 aa)). 8 residues coordinate Zn(2+): Cys18, Cys21, Cys37, Cys40, Cys45, Cys48, Cys60, and Cys63. The RING-type; degenerate zinc finger occupies 18–64 (CRVCGEEVAAREDGKPFVACAECGFPVCKPCYEYERSEGTQCCPQCN). Residues 116–154 (NGEQPAQKWRPGGPALSSFTGSVAGKDLEQEREMEGGME) are disordered. Residues 141 to 154 (KDLEQEREMEGGME) are compositionally biased toward basic and acidic residues. A helical membrane pass occupies residues 214–234 (IVIVLRLVVLCFFLKFRITTP). Over 235 to 237 (AMD) the chain is Extracellular. A helical membrane pass occupies residues 238–258 (AVPLWLASVICELWFALSWIL). Over 259–845 (DQLPKWSPVT…TNTIVYPFTS (587 aa)) the chain is Cytoplasmic. Positions 297, 303, 304, and 333 each coordinate UDP-alpha-D-glucose. Residue Asp333 is part of the active site. Residues 387–414 (VKERRAMKREYEEFKVRINALVAKAQKK) adopt a coiled-coil conformation. Lys474 contacts UDP-alpha-D-glucose. 2 residues coordinate Mn(2+): Lys475 and Asp499. Asp762 is a catalytic residue. Residues 846–866 (IPLLAYCTIPAVCLLTGKFII) form a helical membrane-spanning segment. At 867–871 (PTLNN) the chain is on the extracellular side. The chain crosses the membrane as a helical span at residues 872–892 (LASIWFIALFLSIIATGVLEL). The Cytoplasmic segment spans residues 893-907 (RWSGVSIEDWWRNEQ). A helical membrane pass occupies residues 908 to 928 (FWVIGGVSAHLFAVFQGLLKV). Residues 929–959 (LGGVDTNFTVTSKAAADETDAFGELYLFKWT) are Extracellular-facing. Asn935 is a glycosylation site (N-linked (GlcNAc...) asparagine). Residues 960-980 (TLLVPPTTLIIINMVGIVAGV) form a helical membrane-spanning segment. Residues 981 to 991 (SDAVNNGYGSW) are Cytoplasmic-facing. The chain crosses the membrane as a helical span at residues 992–1012 (GPLFGKLFFSFWVILHLYPFL). Residues 1013-1021 (KGLMGRQNR) lie on the Extracellular side of the membrane. A helical membrane pass occupies residues 1022 to 1042 (TPTIVVLWSILLASIFSLVWV). Over 1043–1063 (RIDPFIPKPKGPVLKPCGVSC) the chain is Cytoplasmic.

Belongs to the glycosyltransferase 2 family. Plant cellulose synthase subfamily. Mn(2+) is required as a cofactor. Zn(2+) serves as cofactor.

It localises to the cell membrane. The catalysed reaction is [(1-&gt;4)-beta-D-glucosyl](n) + UDP-alpha-D-glucose = [(1-&gt;4)-beta-D-glucosyl](n+1) + UDP + H(+). It participates in glycan metabolism; plant cellulose biosynthesis. Catalytic subunit of cellulose synthase terminal complexes ('rosettes'), required for beta-1,4-glucan microfibril crystallization, a major mechanism of the cell wall formation. Involved in the secondary cell wall formation. The sequence is that of Cellulose synthase A catalytic subunit 7 [UDP-forming] (CESA7) from Oryza sativa subsp. japonica (Rice).